The primary structure comprises 343 residues: Tryptophan--tRNA ligase (343 aa).

Residues 15–17 and 24–25 each bind ATP; these read QPT and GN. A 'HIGH' region motif is present at residues 16–25; that stretch reads PTSDSLHLGN. Asp-145 is a binding site for L-tryptophan. Residues 157 to 159, Ile-196, and 205 to 209 each bind ATP; these read GED and KMSKS. A 'KMSKS' region motif is present at residues 205-209; it reads KMSKS.

This sequence belongs to the class-I aminoacyl-tRNA synthetase family. As to quaternary structure, homodimer.

Its subcellular location is the cytoplasm. The enzyme catalyses tRNA(Trp) + L-tryptophan + ATP = L-tryptophyl-tRNA(Trp) + AMP + diphosphate + H(+). In terms of biological role, catalyzes the attachment of tryptophan to tRNA(Trp). The chain is Tryptophan--tRNA ligase from Mycobacterium leprae (strain TN).